Here is a 143-residue protein sequence, read N- to C-terminus: Large ribosomal subunit protein uL15 (143 aa).

The segment at 20-52 (GRGIGSGKGKTAGRGHKGQHSRAGGYHKVGFEG) is disordered. Positions 30–39 (TAGRGHKGQH) are enriched in basic residues.

The protein belongs to the universal ribosomal protein uL15 family. As to quaternary structure, part of the 50S ribosomal subunit.

Binds to the 23S rRNA. This is Large ribosomal subunit protein uL15 from Coxiella burnetii (strain CbuK_Q154) (Coxiella burnetii (strain Q154)).